A 268-amino-acid polypeptide reads, in one-letter code: MERYETLFARLKERKEGAFVPFVTLGDPGIEQSLKIIDALIEAGADALELGIPFSDPLADGPTIQNATLRAFAAGVTPAQCFEMLGLIRQKHPNIPIGLLMYANLVFNKGIDEFYAQCEKVGVDSVLVADVPVEESAPFRQAALRHNVAPIFICPPNADEDLLRQIASYGRGYTYLLSRAGVTGAENRAALPLNHLVAKLKEYNAAPPLQGFGISAPDQVKAAIDAGAAGAISGSAIVKIIEQHINEPEKMLAVLKAFVQPMKAATRS.

Active-site proton acceptor residues include Glu-49 and Asp-60.

It belongs to the TrpA family. Tetramer of two alpha and two beta chains.

The enzyme catalyses (1S,2R)-1-C-(indol-3-yl)glycerol 3-phosphate + L-serine = D-glyceraldehyde 3-phosphate + L-tryptophan + H2O. The protein operates within amino-acid biosynthesis; L-tryptophan biosynthesis; L-tryptophan from chorismate: step 5/5. The alpha subunit is responsible for the aldol cleavage of indoleglycerol phosphate to indole and glyceraldehyde 3-phosphate. This chain is Tryptophan synthase alpha chain, found in Escherichia fergusonii (strain ATCC 35469 / DSM 13698 / CCUG 18766 / IAM 14443 / JCM 21226 / LMG 7866 / NBRC 102419 / NCTC 12128 / CDC 0568-73).